Reading from the N-terminus, the 405-residue chain is Acetylornithine aminotransferase (405 aa).

Pyridoxal 5'-phosphate-binding positions include 107 to 108 (GA) and Phe140. Arg143 contacts N(2)-acetyl-L-ornithine. 225–228 (DEVQ) contributes to the pyridoxal 5'-phosphate binding site. Lys254 bears the N6-(pyridoxal phosphate)lysine mark. Ser282 is a binding site for N(2)-acetyl-L-ornithine. Thr283 lines the pyridoxal 5'-phosphate pocket.

It belongs to the class-III pyridoxal-phosphate-dependent aminotransferase family. ArgD subfamily. As to quaternary structure, homodimer. It depends on pyridoxal 5'-phosphate as a cofactor.

It is found in the cytoplasm. It catalyses the reaction N(2)-acetyl-L-ornithine + 2-oxoglutarate = N-acetyl-L-glutamate 5-semialdehyde + L-glutamate. The protein operates within amino-acid biosynthesis; L-arginine biosynthesis; N(2)-acetyl-L-ornithine from L-glutamate: step 4/4. This chain is Acetylornithine aminotransferase, found in Shewanella oneidensis (strain ATCC 700550 / JCM 31522 / CIP 106686 / LMG 19005 / NCIMB 14063 / MR-1).